The primary structure comprises 587 residues: Nucleoporin ndc-1 (587 aa).

At 1–79 (MMGENSSAYT…FHSEIDVRKK (79 aa)) the chain is on the cytoplasmic side. The interval 32-55 (ASTSATSSPNLRKSPNRGFSSPRA) is disordered. Residues 80-100 (LASFVCGAAVALSFIVTVSIL) traverse the membrane as a helical segment. Residues 101 to 121 (KLSIWAPFSSVQDSLTWWLYP) are Perinuclear space-facing. Residues 122-142 (TSWPVTLFIWLSSVAWTFLII) form a helical membrane-spanning segment. Over 143 to 161 (HQFCTVTQVPRIPITDTYA) the chain is Cytoplasmic. Residues 162 to 182 (WAGAALEFVHRLIFVYTAFTV) form a helical membrane-spanning segment. The Perinuclear space portion of the chain corresponds to 183-187 (SESSF). A helical membrane pass occupies residues 188 to 208 (FEDFAWIAIAFSVAISSALVI). Topologically, residues 209–255 (FRSDFHLNFSNVQVNSFKTLIDFAKSLPYGSLAETSGVDAAIAYTAA) are cytoplasmic. Residues 256–276 (MALTVFGSPLLWGFSAWWLLI) traverse the membrane as a helical segment. Residues 277 to 281 (NIQFH) lie on the Perinuclear space side of the membrane. Residues 282–302 (LVLFGVCFAQQFFAKIFMKIV) form a helical membrane-spanning segment. Residues 303 to 587 (NQIVMKPMKF…TIKLVCAEEI (285 aa)) are Cytoplasmic-facing.

The protein belongs to the NDC1 family.

The protein localises to the nucleus. The protein resides in the nuclear pore complex. It is found in the nucleus membrane. Component of the nuclear pore complex (NPC), which plays a key role in de novo assembly and insertion of NPC in the nuclear envelope. In Caenorhabditis briggsae, this protein is Nucleoporin ndc-1 (npp-22).